Consider the following 387-residue polypeptide: GTPase Obg (387 aa).

The Obg domain maps to 1–159; the sequence is MKFVDEAVIR…RSLRLELMLL (159 aa). In terms of domain architecture, OBG-type G spans 160–333; the sequence is ADVGLLGMPN…LALKLMDFID (174 aa). GTP contacts are provided by residues 166-173, 191-195, 213-216, 283-286, and 314-316; these read GMPNAGKS, FTTLV, DIPG, NKTD, and SAY. The Mg(2+) site is built by S173 and T193.

This sequence belongs to the TRAFAC class OBG-HflX-like GTPase superfamily. OBG GTPase family. Monomer. Mg(2+) is required as a cofactor.

It localises to the cytoplasm. Its function is as follows. An essential GTPase which binds GTP, GDP and possibly (p)ppGpp with moderate affinity, with high nucleotide exchange rates and a fairly low GTP hydrolysis rate. Plays a role in control of the cell cycle, stress response, ribosome biogenesis and in those bacteria that undergo differentiation, in morphogenesis control. The chain is GTPase Obg from Shewanella loihica (strain ATCC BAA-1088 / PV-4).